The primary structure comprises 396 residues: L-lactate dehydrogenase (396 aa).

One can recognise an FMN hydroxy acid dehydrogenase domain in the interval 1–380 (MIISAASDYR…TQDSLVQELS (380 aa)). Substrate is bound at residue tyrosine 24. FMN is bound by residues serine 106 and glutamine 127. Tyrosine 129 serves as a coordination point for substrate. Threonine 155 is an FMN binding site. Arginine 164 is a substrate binding site. Lysine 251 contacts FMN. Catalysis depends on histidine 275, which acts as the Proton acceptor. Arginine 278 lines the substrate pocket. FMN is bound at residue 306–330 (DSGIRNGLDVVRMIALGADTVLLGR).

The protein belongs to the FMN-dependent alpha-hydroxy acid dehydrogenase family. FMN is required as a cofactor.

Its subcellular location is the cell inner membrane. The catalysed reaction is (S)-lactate + A = pyruvate + AH2. Functionally, catalyzes the conversion of L-lactate to pyruvate. Is coupled to the respiratory chain. This chain is L-lactate dehydrogenase, found in Escherichia coli (strain SMS-3-5 / SECEC).